A 121-amino-acid polypeptide reads, in one-letter code: Large ribosomal subunit protein uL14 (121 aa).

It belongs to the universal ribosomal protein uL14 family. Part of the 50S ribosomal subunit. Forms a cluster with proteins L3 and L19. In the 70S ribosome, L14 and L19 interact and together make contacts with the 16S rRNA in bridges B5 and B8.

In terms of biological role, binds to 23S rRNA. Forms part of two intersubunit bridges in the 70S ribosome. This Prochlorococcus marinus (strain MIT 9515) protein is Large ribosomal subunit protein uL14.